The following is a 146-amino-acid chain: Hemoglobin subunit beta-1 (146 aa).

The Globin domain maps to 2-146 (GLTAHDRQLI…IADALGKGYH (145 aa)). The heme b site is built by H63 and H92.

This sequence belongs to the globin family. Heterotetramer of two alpha chains and two beta chains. Red blood cells.

In terms of biological role, involved in oxygen transport from the lung to the various peripheral tissues. This Xenopus borealis (Kenyan clawed frog) protein is Hemoglobin subunit beta-1 (hbb1).